We begin with the raw amino-acid sequence, 901 residues long: MSYKVIVPATVLPPWLRVGENWIFARHRRTEVGVVLPANTKFRVRADFSRAGFTRPVIVRLLNNNRSTEREINLNNDQWMEVEHAHESVPFVDWLVGEKNTMAEVYFEIDGPHIPLPVYVFNTRPVEHFKSEYRQSSSGYCFLYLDLVCMLVPPASKNALLDVNIFELHQFYNEIINYYDDLCGLVEDPYADTVDSNLPNKAAFVKADAGGPGGAYYGPFWTAPASSNLGDYLRISPTNWMVIHELGHAYDFVFTVNTILIEIWNNSLCDRIQYKWMNKIKRQQLARVYENRRPQKEATIQALIDNNSPFDNWGFFERLIIFTWLYNPQRGLDTLRNINHSYRVHATRNSSIPYPQIWSWLTTSAYDNFWLYFNLVGVYPADFYVNEHNKVVHFNLHLRALALGQSVRYPIKYIITDFDLVSKNYDIKQYLESNFDLVIPEELRQTDLLADVRVVCVIDDPSQIVGEPFSVYDGNERVFESTVATDGNMYLVGVGPGVYTLRAPRGKNKRYKLHLAHSPREPVHPANDHMYLLVTYPYYNQTLTYTPYVNSDLAVDMAHLFGSNDRRYVATIYFNPFEQTVTVHLNNIRAGRENNTTLYFEMVISNPFNGQSQTFTILEDNPTLRQGYYKFDVVTYSSIRLNMSVAGRLLFRRYIFAGGTTTLTMFPNQVLEPNLFPDGSALNRTLARLREQAAFLDNYSQLMYIENELRDTIYLASQLVDPASDEFVKYYPDYFRDPHTYVYLFRFRGLGDFVLLDLQIVPLLNLATVRIANIQNGPHSYFDTLYFKVELRDTNGAIVFSYSRRGNEPMTPEHHKFEVYSGYTVELFMREPGNRLQLIVNKMLDTALPSTQNIFARITDTQLVVGDTSIEDNLVTSINVDCGDDDNQKIRVVETLKMIAF.

The 304-residue stretch at 27–330 (HRRTEVGVVL…IFTWLYNPQR (304 aa)) folds into the Peptidase M60 domain. Residues Asn65, Asn265, Asn339, Asn349, Asn540, Asn594, Asn595, Asn642, Asn683, and Asn698 are each glycosylated (N-linked (GlcNAc...) asparagine; by host).

In terms of biological role, involved in disruption of the peritrophic membrane and fusion of nucleocapsids with midgut cells. The sequence is that of Viral-enhancing factor (VEF) from Trichoplusia ni (Cabbage looper).